The chain runs to 707 residues: Anaerobic ribonucleoside-triphosphate reductase (707 aa).

An ATP-cone domain is found at 4-95 (FGVIKRDGSR…EYRHDRDLAR (92 aa)). A Glycine radical domain is found at 584 to 707 (KKVNPYDKLD…EEVKRRVKHL (124 aa)). Positions 645, 648, 663, and 666 each coordinate Zn(2+). Glycine radical is present on Gly-682.

This sequence belongs to the anaerobic ribonucleoside-triphosphate reductase family. As to quaternary structure, forms a tetramer composed of two NrdD and two NrdG subunits.

It catalyses the reaction a ribonucleoside 5'-triphosphate + formate + H(+) = a 2'-deoxyribonucleoside 5'-triphosphate + CO2 + H2O. With respect to regulation, activated under anaerobic conditions by NrdG, a tightly associated activase. Activation involves the formation of a glycyl radical at Gly-682. Functionally, catalyzes the conversion of ribonucleotides into deoxyribonucleotides, which are required for DNA synthesis and repair. This Haemophilus influenzae (strain ATCC 51907 / DSM 11121 / KW20 / Rd) protein is Anaerobic ribonucleoside-triphosphate reductase (nrdD).